We begin with the raw amino-acid sequence, 455 residues long: Bifunctional protein GlmU (455 aa).

The pyrophosphorylase stretch occupies residues Met-1–Gly-229. Residues Leu-11–Gly-14, Lys-25, Gln-76, Gly-81–Thr-82, Tyr-103–Asp-105, Gly-140, Glu-154, Asn-169, and Asn-227 each bind UDP-N-acetyl-alpha-D-glucosamine. Asp-105 is a binding site for Mg(2+). Residue Asn-227 coordinates Mg(2+). The interval Leu-230–Ser-250 is linker. The interval Gly-251 to Thr-455 is N-acetyltransferase. UDP-N-acetyl-alpha-D-glucosamine contacts are provided by Arg-333 and Lys-351. Residue His-363 is the Proton acceptor of the active site. UDP-N-acetyl-alpha-D-glucosamine-binding residues include Tyr-366 and Asn-377. Acetyl-CoA-binding positions include Ala-380, Asn-386 to Tyr-387, Ser-405, Ala-423, and Arg-440.

It in the N-terminal section; belongs to the N-acetylglucosamine-1-phosphate uridyltransferase family. This sequence in the C-terminal section; belongs to the transferase hexapeptide repeat family. In terms of assembly, homotrimer. Requires Mg(2+) as cofactor.

The protein resides in the cytoplasm. The enzyme catalyses alpha-D-glucosamine 1-phosphate + acetyl-CoA = N-acetyl-alpha-D-glucosamine 1-phosphate + CoA + H(+). It catalyses the reaction N-acetyl-alpha-D-glucosamine 1-phosphate + UTP + H(+) = UDP-N-acetyl-alpha-D-glucosamine + diphosphate. It functions in the pathway nucleotide-sugar biosynthesis; UDP-N-acetyl-alpha-D-glucosamine biosynthesis; N-acetyl-alpha-D-glucosamine 1-phosphate from alpha-D-glucosamine 6-phosphate (route II): step 2/2. It participates in nucleotide-sugar biosynthesis; UDP-N-acetyl-alpha-D-glucosamine biosynthesis; UDP-N-acetyl-alpha-D-glucosamine from N-acetyl-alpha-D-glucosamine 1-phosphate: step 1/1. The protein operates within bacterial outer membrane biogenesis; LPS lipid A biosynthesis. Its function is as follows. Catalyzes the last two sequential reactions in the de novo biosynthetic pathway for UDP-N-acetylglucosamine (UDP-GlcNAc). The C-terminal domain catalyzes the transfer of acetyl group from acetyl coenzyme A to glucosamine-1-phosphate (GlcN-1-P) to produce N-acetylglucosamine-1-phosphate (GlcNAc-1-P), which is converted into UDP-GlcNAc by the transfer of uridine 5-monophosphate (from uridine 5-triphosphate), a reaction catalyzed by the N-terminal domain. The chain is Bifunctional protein GlmU from Hamiltonella defensa subsp. Acyrthosiphon pisum (strain 5AT).